Consider the following 434-residue polypeptide: UDP-glucose 6-dehydrogenase (434 aa).

NAD(+) contacts are provided by residues 2-19, valine 11, aspartate 30, lysine 35, threonine 121, and glutamate 152; that span reads NITF…GIIM. Substrate contacts are provided by residues 148 to 152, lysine 204, asparagine 208, 249 to 253, and glycine 257; these read EFLRE and FLNAG. Cysteine 260 serves as the catalytic Nucleophile. Position 263 (lysine 263) interacts with NAD(+). Position 321 (lysine 321) interacts with substrate. Arginine 328 is an NAD(+) binding site.

This sequence belongs to the UDP-glucose/GDP-mannose dehydrogenase family.

It catalyses the reaction UDP-alpha-D-glucose + 2 NAD(+) + H2O = UDP-alpha-D-glucuronate + 2 NADH + 3 H(+). It participates in nucleotide-sugar biosynthesis; UDP-alpha-D-glucuronate biosynthesis; UDP-alpha-D-glucuronate from UDP-alpha-D-glucose: step 1/1. The polypeptide is UDP-glucose 6-dehydrogenase (udg) (Rickettsia prowazekii (strain Madrid E)).